A 537-amino-acid polypeptide reads, in one-letter code: Extracellular exo-inulinase (537 aa).

Positions 1 to 19 (MAPLSKALSVFMLMGITYA) are cleaved as a signal peptide. Positions 40 and 41 each coordinate beta-D-fructose. The active-site Nucleophile is the Asp-41. N-linked (GlcNAc...) asparagine glycosylation occurs at Asn-49. 2 residues coordinate beta-D-fructose: Gln-57 and Trp-65. A glycan (N-linked (GlcNAc...) asparagine) is linked at Asn-67. Beta-D-fructose is bound at residue Ser-103. N-linked (GlcNAc...) asparagine glycans are attached at residues Asn-111 and Asn-112. Beta-D-fructose-binding residues include Arg-188, Asp-189, and Glu-241. Glu-241 (proton donor/acceptor) is an active-site residue. 2 N-linked (GlcNAc...) asparagine glycosylation sites follow: Asn-254 and Asn-300. Trp-335 is a beta-D-fructose binding site. Asn-398 and Asn-430 each carry an N-linked (GlcNAc...) asparagine glycan.

The protein belongs to the glycosyl hydrolase 32 family.

Its subcellular location is the secreted. It carries out the reaction Hydrolysis of terminal, non-reducing (2-&gt;1)- and (2-&gt;6)-linked beta-D-fructofuranose residues in fructans.. Functionally, exo-inulinase involved in utilization of the plant storage polymer inulin, consisting of fructooligosaccharides with a degree of polymerization (DP) value from 2 to 60. Splits off terminal fructose units successively from the non-reducing end of the inulin molecule, and also hydrolyzes levan, stachyose and raffinose. Hydrolyzes both beta-2,1- as well as beta-2,6-fructosyl linkages in fructooligosaccharides. This Aspergillus awamori (Black koji mold) protein is Extracellular exo-inulinase.